The primary structure comprises 117 residues: LYR motif-containing protein 1 (117 aa).

The protein belongs to the complex I LYR family.

This chain is LYR motif-containing protein 1 (lyrm1), found in Dictyostelium discoideum (Social amoeba).